The primary structure comprises 174 residues: NADH-quinone oxidoreductase subunit B (174 aa).

The [4Fe-4S] cluster site is built by cysteine 53, cysteine 54, cysteine 118, and cysteine 148.

It belongs to the complex I 20 kDa subunit family. In terms of assembly, NDH-1 is composed of 14 different subunits. Subunits NuoB, C, D, E, F, and G constitute the peripheral sector of the complex. [4Fe-4S] cluster is required as a cofactor.

It is found in the cell inner membrane. It catalyses the reaction a quinone + NADH + 5 H(+)(in) = a quinol + NAD(+) + 4 H(+)(out). NDH-1 shuttles electrons from NADH, via FMN and iron-sulfur (Fe-S) centers, to quinones in the respiratory chain. Couples the redox reaction to proton translocation (for every two electrons transferred, four hydrogen ions are translocated across the cytoplasmic membrane), and thus conserves the redox energy in a proton gradient. In Ruegeria sp. (strain TM1040) (Silicibacter sp.), this protein is NADH-quinone oxidoreductase subunit B.